Here is a 706-residue protein sequence, read N- to C-terminus: Zinc finger and BTB domain-containing protein 17 (706 aa).

One can recognise a BTB domain in the interval 1–12 (LKSLTVLAESPV). A disordered region spans residues 32–194 (TAARVTQGDS…LLRSGTYSDR (163 aa)). A compositionally biased stretch (basic and acidic residues) spans 67–78 (EPAEQPDAKEGP). Residues 90-106 (AAEASPAAVSPSRPQPA) are compositionally biased toward low complexity. Acidic residues predominate over residues 134–148 (GKEEEGEAMVEDEEE). The segment covering 170–182 (SGSTDSGQENSGE) has biased composition (polar residues). C2H2-type zinc fingers lie at residues 205 to 227 (HKCE…IRIH), 233 to 255 (FSCR…EKTH), 261 to 283 (YGCE…KKRH), 289 to 311 (YRCD…QLVH), 317 to 339 (YQCD…LETH), 345 to 367 (HKCP…LKIH), 373 to 395 (LKCR…LRIH), 401 to 423 (YVCV…VPIH), 427 to 450 (KPCQ…HVRH), 457 to 479 (YVCE…IRHH), 485 to 507 (HKCT…IIIH), 513 to 536 (FLCD…KTVH), and 618 to 640 (YACD…VRIH). A disordered region spans residues 680–706 (PRDSPQEAPAAPLAPVPLAGEGQAPAE). The span at 687–698 (APAAPLAPVPLA) shows a compositional bias: low complexity.

This sequence belongs to the krueppel C2H2-type zinc-finger protein family.

Its subcellular location is the nucleus. In terms of biological role, transcription factor that can function as an activator or repressor depending on its binding partners, and by targeting negative regulators of cell cycle progression. Plays a critical role in early lymphocyte development, where it is essential to prevent apoptosis in lymphoid precursors, allowing them to survive in response to IL7 and undergo proper lineage commitment. Has been shown to bind to the promoters of adenovirus major late protein and cyclin D1 and activate transcription. Required for early embryonic development during gastrulation. Represses RB1 transcription. This chain is Zinc finger and BTB domain-containing protein 17 (ZBTB17), found in Gallus gallus (Chicken).